Here is a 503-residue protein sequence, read N- to C-terminus: Guanosine-5'-triphosphate,3'-diphosphate pyrophosphatase (503 aa).

It belongs to the GppA/Ppx family. GppA subfamily.

It carries out the reaction guanosine 3'-diphosphate 5'-triphosphate + H2O = guanosine 3',5'-bis(diphosphate) + phosphate + H(+). Its pathway is purine metabolism; ppGpp biosynthesis; ppGpp from GTP: step 2/2. Catalyzes the conversion of pppGpp to ppGpp. Guanosine pentaphosphate (pppGpp) is a cytoplasmic signaling molecule which together with ppGpp controls the 'stringent response', an adaptive process that allows bacteria to respond to amino acid starvation, resulting in the coordinated regulation of numerous cellular activities. The sequence is that of Guanosine-5'-triphosphate,3'-diphosphate pyrophosphatase from Pseudoalteromonas atlantica (strain T6c / ATCC BAA-1087).